The following is a 335-amino-acid chain: Nucleoid-associated protein PSEEN4449 (335 aa).

This sequence belongs to the YejK family.

It is found in the cytoplasm. Its subcellular location is the nucleoid. The sequence is that of Nucleoid-associated protein PSEEN4449 from Pseudomonas entomophila (strain L48).